The following is a 344-amino-acid chain: NADH-quinone oxidoreductase subunit H 2 (344 aa).

8 helical membrane-spanning segments follow: residues 13 to 33 (LPIL…VAWL), 82 to 102 (ILFL…WAVI), 116 to 136 (ALLY…LAGW), 161 to 181 (MGFA…GEIV), 188 to 208 (FWHW…ISGV), 240 to 260 (LFFL…ALMF), 280 to 300 (VPGI…YLWF), and 319 to 339 (VFIP…VAQL).

It belongs to the complex I subunit 1 family. In terms of assembly, NDH-1 is composed of 14 different subunits. Subunits NuoA, H, J, K, L, M, N constitute the membrane sector of the complex.

It is found in the cell inner membrane. The catalysed reaction is a quinone + NADH + 5 H(+)(in) = a quinol + NAD(+) + 4 H(+)(out). Functionally, NDH-1 shuttles electrons from NADH, via FMN and iron-sulfur (Fe-S) centers, to quinones in the respiratory chain. The immediate electron acceptor for the enzyme in this species is believed to be ubiquinone. Couples the redox reaction to proton translocation (for every two electrons transferred, four hydrogen ions are translocated across the cytoplasmic membrane), and thus conserves the redox energy in a proton gradient. This subunit may bind ubiquinone. The chain is NADH-quinone oxidoreductase subunit H 2 from Nitrosococcus oceani (strain ATCC 19707 / BCRC 17464 / JCM 30415 / NCIMB 11848 / C-107).